Here is a 1238-residue protein sequence, read N- to C-terminus: Protein translocase subunit SecA 1 (1238 aa).

Residues Gln107, 125-129, and Asp570 each bind ATP; that span reads GEGKT. Residues 1194-1220 are disordered; sequence AAGSEGRAEGSVDTVRVEEPRIGRNAP. A compositionally biased stretch (basic and acidic residues) spans 1199–1215; the sequence is GRAEGSVDTVRVEEPRI. Positions 1221, 1223, 1232, and 1233 each coordinate Zn(2+).

It belongs to the SecA family. In terms of assembly, monomer and homodimer. Part of the essential Sec protein translocation apparatus which comprises SecA, SecYEG and auxiliary proteins SecDF. Other proteins may also be involved. It depends on Zn(2+) as a cofactor.

It localises to the cell inner membrane. Its subcellular location is the cytoplasm. The enzyme catalyses ATP + H2O + cellular proteinSide 1 = ADP + phosphate + cellular proteinSide 2.. Functionally, part of the Sec protein translocase complex. Interacts with the SecYEG preprotein conducting channel. Has a central role in coupling the hydrolysis of ATP to the transfer of proteins into and across the cell membrane, serving as an ATP-driven molecular motor driving the stepwise translocation of polypeptide chains across the membrane. This Rhodopirellula baltica (strain DSM 10527 / NCIMB 13988 / SH1) protein is Protein translocase subunit SecA 1.